The following is a 285-amino-acid chain: Probable endonuclease 4 (285 aa).

Residues histidine 69, histidine 109, glutamate 145, aspartate 179, histidine 182, histidine 216, aspartate 229, histidine 231, and glutamate 261 each contribute to the Zn(2+) site.

The protein belongs to the AP endonuclease 2 family. The cofactor is Zn(2+).

The enzyme catalyses Endonucleolytic cleavage to 5'-phosphooligonucleotide end-products.. Functionally, endonuclease IV plays a role in DNA repair. It cleaves phosphodiester bonds at apurinic or apyrimidinic (AP) sites, generating a 3'-hydroxyl group and a 5'-terminal sugar phosphate. This Shigella dysenteriae serotype 1 (strain Sd197) protein is Probable endonuclease 4.